Here is a 305-residue protein sequence, read N- to C-terminus: ATP synthase F(0) complex subunit B2, mitochondrial (305 aa).

Residues methionine 1–leucine 22 constitute a mitochondrion transit peptide.

The protein belongs to the eukaryotic ATPase B chain family. Subunit of the F-type ATPase which has 2 components, CF(1) - the catalytic core - and CF(0) - the membrane proton channel.

It is found in the mitochondrion. The protein localises to the mitochondrion inner membrane. In terms of biological role, mitochondrial membrane ATP synthase (F(1)F(0) ATP synthase or Complex V) produces ATP from ADP in the presence of a proton gradient across the membrane which is generated by electron transport complexes of the respiratory chain. F-type ATPases consist of two structural domains, F(1) - containing the extramembraneous catalytic core, and F(0) - containing the membrane proton channel, linked together by a central stalk and a peripheral stalk. During catalysis, ATP synthesis in the catalytic domain of F(1) is coupled via a rotary mechanism of the central stalk subunits to proton translocation. Part of the complex F(0) domain and the peripheric stalk, which acts as a stator to hold the subunits of the catalytic subcomplexes relative to the rotary elements. Plays a role in somatic development. Does not play a role in germline development. This Caenorhabditis elegans protein is ATP synthase F(0) complex subunit B2, mitochondrial.